The chain runs to 202 residues: MKKLLLIIGIISLMTSMSMCLNNNNLNNLDLKKSILVEVNGTPIEIPLRATVGEAKEVKLINTTDREIYNYYHSKILIYIKGDMNISVKEGGVSIVDLVTKLEWFNQFYPHNIVVELNRTNSTVTVKSIFANGKTSITELKVNESEYLMHNNKTMVIEILKTHNTATITKINNTFIIEGNSLKELDNAETRFVIDMFKGSIT.

This is an uncharacterized protein from Methanocaldococcus jannaschii (strain ATCC 43067 / DSM 2661 / JAL-1 / JCM 10045 / NBRC 100440) (Methanococcus jannaschii).